A 211-amino-acid chain; its full sequence is Protein-L-isoaspartate O-methyltransferase (211 aa).

Ser-60 is a catalytic residue.

The protein belongs to the methyltransferase superfamily. L-isoaspartyl/D-aspartyl protein methyltransferase family.

Its subcellular location is the cytoplasm. It carries out the reaction [protein]-L-isoaspartate + S-adenosyl-L-methionine = [protein]-L-isoaspartate alpha-methyl ester + S-adenosyl-L-homocysteine. Its function is as follows. Catalyzes the methyl esterification of L-isoaspartyl residues in peptides and proteins that result from spontaneous decomposition of normal L-aspartyl and L-asparaginyl residues. It plays a role in the repair and/or degradation of damaged proteins. This Pseudomonas syringae pv. syringae (strain B728a) protein is Protein-L-isoaspartate O-methyltransferase.